The chain runs to 312 residues: Olfactory receptor-like protein COR4 (312 aa).

Over 1–26 the chain is Extracellular; that stretch reads MASGNCTTPTTFILSGLTDNPGLQMP. An N-linked (GlcNAc...) asparagine glycan is attached at N5. A helical transmembrane segment spans residues 27 to 49; the sequence is LFMVFLAIYTITLLTNLGLIALI. Residues 50–57 lie on the Cytoplasmic side of the membrane; it reads SVDLHLQT. A helical transmembrane segment spans residues 58–79; it reads PMYIFLQNLSFTDAAYSTVITP. At 80–100 the chain is on the extracellular side; that stretch reads KMLATFLEERKTISYIGCILQ. An intrachain disulfide couples C97 to C179. Residues 101-120 form a helical membrane-spanning segment; sequence YFSFVLLTVTESLLLAVMAY. Over 121 to 139 the chain is Cytoplasmic; the sequence is DRYVAICKPLLYPSIMTKA. The chain crosses the membrane as a helical span at residues 140-164; that stretch reads VCWRLVKGLYSLAFLNSLVHTSGLL. At 165–205 the chain is on the extracellular side; that stretch reads KLSFCSSNVVNHFFCDNSPLFQISSSSTTLNELLVFIFGSL. Residues 206–226 form a helical membrane-spanning segment; it reads FAMSSIITILISYVFIILTVV. Residues 227–239 lie on the Cytoplasmic side of the membrane; that stretch reads RIRSKDGKYKAFS. A helical transmembrane segment spans residues 240–260; that stretch reads TCTSHLMAVSLFHGTVIFMYL. Over 261 to 271 the chain is Extracellular; it reads RPVKLFSLDTD. A helical transmembrane segment spans residues 272–292; it reads KIASLFYTVVIPMLNPLIYSW. The Cytoplasmic portion of the chain corresponds to 293–312; that stretch reads RNKEVKDALRRVIATNVWIH.

It belongs to the G-protein coupled receptor 1 family.

The protein localises to the cell membrane. Its function is as follows. Odorant receptor. This is Olfactory receptor-like protein COR4 (COR4) from Gallus gallus (Chicken).